The sequence spans 790 residues: Ribonucleoside-diphosphate reductase large subunit (790 aa).

Residues T208, 223–224 (SC), G254, 436–440 (NLCTE), and 621–625 (PTVSS) each bind substrate. A disulfide bridge links C224 with C453. N436 acts as the Proton acceptor in catalysis. Catalysis depends on C438, which acts as the Cysteine radical intermediate. E440 acts as the Proton acceptor in catalysis.

It belongs to the ribonucleoside diphosphate reductase large chain family. In terms of assembly, heterotetramer composed of a homodimer of the large subunit (R1) and a homodimer of the small subunit (R2). Larger multisubunit protein complex are also active, composed of (R1)n(R2)n.

It catalyses the reaction a 2'-deoxyribonucleoside 5'-diphosphate + [thioredoxin]-disulfide + H2O = a ribonucleoside 5'-diphosphate + [thioredoxin]-dithiol. In terms of biological role, ribonucleoside-diphosphate reductase holoenzyme provides the precursors necessary for viral DNA synthesis. Allows virus growth in non-dividing cells, as well as reactivation from latency in infected hosts. Catalyzes the biosynthesis of deoxyribonucleotides from the corresponding ribonucleotides. The polypeptide is Ribonucleoside-diphosphate reductase large subunit (Equus caballus (Horse)).